The sequence spans 246 residues: 3-deoxy-manno-octulosonate cytidylyltransferase (246 aa).

Belongs to the KdsB family.

The protein localises to the cytoplasm. It carries out the reaction 3-deoxy-alpha-D-manno-oct-2-ulosonate + CTP = CMP-3-deoxy-beta-D-manno-octulosonate + diphosphate. The protein operates within nucleotide-sugar biosynthesis; CMP-3-deoxy-D-manno-octulosonate biosynthesis; CMP-3-deoxy-D-manno-octulosonate from 3-deoxy-D-manno-octulosonate and CTP: step 1/1. It participates in bacterial outer membrane biogenesis; lipopolysaccharide biosynthesis. In terms of biological role, activates KDO (a required 8-carbon sugar) for incorporation into bacterial lipopolysaccharide in Gram-negative bacteria. This chain is 3-deoxy-manno-octulosonate cytidylyltransferase, found in Leptospira borgpetersenii serovar Hardjo-bovis (strain JB197).